We begin with the raw amino-acid sequence, 276 residues long: Diacetylchitobiose uptake system permease protein DasC (276 aa).

A run of 6 helical transmembrane segments spans residues 14–34 (TAVV…ATAF), 74–94 (LIVT…GSFA), 105–125 (GFIV…VIAI), 137–157 (SLVP…ILTL), 186–206 (VILP…FITA), and 241–261 (GATM…FVYL). The region spanning 70–261 (VSNSLIVTVC…IPILILFVYL (192 aa)) is the ABC transmembrane type-1 domain.

The protein belongs to the binding-protein-dependent transport system permease family. In terms of assembly, the complex is composed of two ATP-binding proteins (MsiK), two transmembrane proteins (DasB and DasC) and a solute-binding protein (DasA).

The protein localises to the cell membrane. Part of the ABC transporter complex DasABC-MsiK involved in N,N'-diacetylchitobiose ((GlcNAc)2) uptake. Responsible for the translocation of the substrate across the membrane. The polypeptide is Diacetylchitobiose uptake system permease protein DasC (Streptomyces coelicolor (strain ATCC BAA-471 / A3(2) / M145)).